Consider the following 530-residue polypeptide: RNA-binding protein 39 (530 aa).

A disordered region spans residues 1–146 (MADDIDIEAM…PVREPIDNLT (146 aa)). Ala-2 is subject to N-acetylalanine. Residues 14-32 (PYKKDENKLSSANGHEERS) show a composition bias toward basic and acidic residues. Composition is skewed to basic residues over residues 33-56 (KKRK…KERK) and 64-95 (KKSK…RGRY). Residue Tyr-95 is modified to Phosphotyrosine. 2 positions are modified to phosphoserine: Ser-97 and Ser-100. Lys-111 is covalently cross-linked (Glycyl lysine isopeptide (Lys-Gly) (interchain with G-Cter in SUMO2)). Ser-117 is subject to Phosphoserine. A Glycyl lysine isopeptide (Lys-Gly) (interchain with G-Cter in SUMO2) cross-link involves residue Lys-119. The segment covering 119–130 (KLSRRRSRSKSP) has biased composition (basic residues). A phosphoserine mark is found at Ser-121 and Ser-136. The span at 131–146 (FRKDKSPVREPIDNLT) shows a compositional bias: basic and acidic residues. Residue Thr-146 is modified to Phosphothreonine. An RRM 1 domain is found at 153–230 (RTVFCMQLAA…VPIIVQASQA (78 aa)). Residue Lys-244 forms a Glycyl lysine isopeptide (Lys-Gly) (interchain with G-Cter in SUMO2) linkage. The RRM 2 domain maps to 250-328 (MRLYVGSLHF…RPMKVGHVTE (79 aa)). Residues 291–355 (KGYGFITFSD…RTGIDLGTTG (65 aa)) are activating domain. The segment at 291–406 (KGYGFITFSD…IDLQTRLSQQ (116 aa)) is interaction with JUN. 3 positions are modified to phosphoserine: Ser-334, Ser-337, and Ser-341. The tract at residues 355–406 (GRLQLMARLAEGTGLQIPPAAQQALQMSGSLAFGAVAEFSFVIDLQTRLSQQ) is interaction with ESR1 and ESR2. The interaction with NCOA6 stretch occupies residues 406 to 530 (QTEASALAAA…ATQLLVPSRR (125 aa)). An RRM 3 domain is found at 445–508 (EIKDDVIEEC…KMITAAYVPL (64 aa)).

The protein belongs to the splicing factor SR family. In terms of assembly, interacts with NCOA6 and JUN. Interacts with ESR1 and ESR2, in the presence of estradiol (E2). Interacts with RSRC1 (via Arg/Ser-rich domain). Interacts with SF3B1. Interacts with ZNF106 (via N-terminus). Aryl sulfonamide anticancer drugs, such as indisulam (E7070) or E7820, promote ubiquitination and subsequent degradation by the DCX(DCAF15) complex. RBM39 degradation results in splicing defects and death in cancer cell lines. Aryl sulfonamide anticancer drugs change the substrate specificity of DCAF15 by acting as a molecular glue that promotes binding between DCAF15 and weak affinity interactor RBM39. Widely expressed. Highly expressed in pancreas, skeletal muscle, lung and brain. Expressed at intermediate level in kidney, liver and heart.

It is found in the nucleus speckle. Functionally, RNA-binding protein that acts as a pre-mRNA splicing factor. Acts by promoting exon inclusion via regulation of exon cassette splicing. Also acts as a transcriptional coactivator for steroid nuclear receptors ESR1/ER-alpha and ESR2/ER-beta, and JUN/AP-1, independently of the pre-mRNA splicing factor activity. This Homo sapiens (Human) protein is RNA-binding protein 39.